The following is a 146-amino-acid chain: Leghemoglobin Lb120-29 (146 aa).

Residues Gly-2 to Ser-146 enclose the Globin domain. Nitrated tyrosine occurs at positions 24 and 29. Ser-44 is a binding site for heme b. The residue at position 44 (Ser-44) is a Phosphoserine. His-61 is an O2 binding site. 3 residues coordinate heme b: Lys-64, His-93, and Lys-96. Tyr-134 is modified (nitrated tyrosine).

This sequence belongs to the plant globin family. As to quaternary structure, monomer. Post-translationally, nitrated in effective nodules and particularly in hypoxic conditions; this mechanism may play a protective role in the symbiosis by buffering toxic peroxynitrite NO(2)(-). Nitration level decrease during nodule senescence. Phosphorylation at Ser-44 disrupts the molecular environment of its porphyrin ring oxygen binding pocket, thus leading to a reduced oxygen consumption and to the delivery of oxygen O(2) to symbiosomes. As to expression, root nodules.

It is found in the cytoplasm. It localises to the cytosol. The protein resides in the nucleus. Its function is as follows. Leghemoglobin that reversibly binds oxygen O(2) through a pentacoordinated heme iron. In root nodules, facilitates the diffusion of oxygen to the bacteroids while preventing the bacterial nitrogenase from being inactivated by buffering dioxygen, nitric oxide and carbon monoxide, and promoting the formation of reactive oxygen species (ROS, e.g. H(2)O(2)). This role is essential for symbiotic nitrogen fixation (SNF). This Pisum sativum (Garden pea) protein is Leghemoglobin Lb120-29.